An 841-amino-acid polypeptide reads, in one-letter code: Toll-like receptor 4 (841 aa).

The first 23 residues, 1–23, serve as a signal peptide directing secretion; sequence MMARVRLAAALIPATAILSCLRT. Residues 24-632 are Extracellular-facing; sequence ESWDPCVQVV…FRNATCQMSK (609 aa). The cysteines at positions 29 and 40 are disulfide-linked. Asn35 and Asn73 each carry an N-linked (GlcNAc...) asparagine glycan. LRR repeat units follow at residues 55 to 76, 79 to 100, 103 to 124, 127 to 148, 151 to 172, 176 to 197, and 205 to 225; these read STKM…NFSS, ELQV…TFQG, HLST…AFSG, SLQK…PIGH, TLKE…EYFS, NLEH…DVKV, and NLSL…TFKE. Asn205, Asn238, Asn282, and Asn309 each carry an N-linked (GlcNAc...) asparagine glycan. The cysteines at positions 281 and 306 are disulfide-linked. 9 LRR repeats span residues 352–373, 374–395, 400–422, 423–444, 448–469, 472–495, 497–518, 521–542, and 545–568; these read SLKK…FQLP, SLQY…SHAD, NLKH…MGLE, KLEH…SVFL, NLRY…IFTG, SLKT…FTEL, NLTV…AFHS, SLQV…LYEP, and LLRI…QNLP. A disulfide bridge links Cys390 with Cys391. Asn497 and Asn526 each carry an N-linked (GlcNAc...) asparagine glycan. N-linked (GlcNAc...) asparagine glycans are attached at residues Asn570 and Asn575. An LRRCT domain is found at 579-630; sequence NAFACVCEHQRFLQWVKDQRQLLVGAEQMMCAEPLDMKDMPVLSFRNATCQM. 2 disulfides stabilise this stretch: Cys583-Cys609 and Cys585-Cys628. An N-linked (GlcNAc...) asparagine glycan is attached at Asn625. A helical transmembrane segment spans residues 633 to 653; the sequence is MIISVSVVTVLLVSVVGVLVY. At 654-841 the chain is on the cytoplasmic side; the sequence is KFYFHLMLLA…TNPQEATTST (188 aa). Residues 673 to 816 form the TIR domain; the sequence is STYGAFVIYS…VFWRRLRKAL (144 aa). The segment at 820 to 841 is disordered; sequence KPQSPEGTADAETNPQEATTST. Polar residues predominate over residues 830 to 841; the sequence is AETNPQEATTST.

Belongs to the Toll-like receptor family. As to quaternary structure, belongs to the lipopolysaccharide (LPS) receptor, a multi-protein complex containing at least CD14, LY96 and TLR4. Binding to bacterial LPS leads to homodimerization. Interacts with LY96 via the extracellular domain. Interacts with MYD88 and TIRAP via their respective TIR domains. Interacts with TICAM2. Interacts with NOX4. Interacts with CNPY3 and HSP90B1; this interaction is required for proper folding in the endoplasmic reticulum. Interacts with MAP3K21; this interaction leads to negative regulation of TLR4 signaling. Interacts with CD36, following CD36 stimulation by oxLDL or amyloid-beta 42, and forms a heterodimer with TLR6. The trimeric complex is internalized and triggers inflammatory response. LYN kinase activity facilitates TLR4-TLR6 heterodimerization and signal initiation. Interacts with TICAM1 in response to LPS in a WDFY1-dependent manner. Interacts with WDFY1 in response to LPS. Interacts with SMPDL3B. Interacts with CEACAM1; upon lipopolysaccharide stimulation, forms a complex including TLR4 and the phosphorylated form of SYK and CEACAM1, which in turn, recruits PTPN6 that dephosphorylates SYK, reducing the production of reactive oxygen species (ROS) and lysosome disruption, which in turn, reduces the activity of the inflammasome. Interacts with RFTN1; the interaction occurs in response to lipopolysaccharide stimulation. Interacts with SCIMP; the interaction occurs in response to lipopolysaccharide stimulation and is enhanced by phosphorylation of SCIMP by LYN. This interaction facilitates the phosphorylation of TLR4 by LYN which elicits a selective cytokine response in macrophages. Interacts with TRAF3IP3. Interacts with TREM1; this interaction enhances TLR4-mediated inflammatory response. Interacts with ZG16B/PAUF. Interacts with CD82; this interaction inhibits TLR4-mediated signaling pathway. In terms of processing, phosphorylated on tyrosine residues by LYN after binding lipopolysaccharide. Post-translationally, ubiquitinated by RNF128 via 'Lys-28'-linked polyubiquitin chains, leading to proteasomal degradation.

It is found in the cell membrane. The protein resides in the early endosome. The protein localises to the cell projection. It localises to the ruffle. Its function is as follows. Transmembrane receptor that functions as a pattern recognition receptor recognizing pathogen- and damage-associated molecular patterns (PAMPs and DAMPs) to induce innate immune responses via downstream signaling pathways. At the plasma membrane, cooperates with LY96 to mediate the innate immune response to bacterial lipopolysaccharide (LPS). Also involved in LPS-independent inflammatory responses triggered by free fatty acids, such as palmitate, and Ni(2+). Mechanistically, acts via MYD88, TIRAP and TRAF6, leading to NF-kappa-B activation, cytokine secretion and the inflammatory response. Alternatively, CD14-mediated TLR4 internalization via endocytosis is associated with the initiation of a MYD88-independent signaling via the TICAM1-TBK1-IRF3 axis leading to type I interferon production. In addition to the secretion of proinflammatory cytokines, initiates the activation of NLRP3 inflammasome and formation of a positive feedback loop between autophagy and NF-kappa-B signaling cascade. In complex with TLR6, promotes inflammation in monocytes/macrophages by associating with TLR6 and the receptor CD86. Upon ligand binding, such as oxLDL or amyloid-beta 42, the TLR4:TLR6 complex is internalized and triggers inflammatory response, leading to NF-kappa-B-dependent production of CXCL1, CXCL2 and CCL9 cytokines, via MYD88 signaling pathway, and CCL5 cytokine, via TICAM1 signaling pathway. In myeloid dendritic cells, vesicular stomatitis virus glycoprotein G but not LPS promotes the activation of IRF7, leading to type I IFN production in a CD14-dependent manner. The polypeptide is Toll-like receptor 4 (TLR4) (Boselaphus tragocamelus (Nilgai)).